The following is a 669-amino-acid chain: MSPIQVVVFALSRIFLLLFRLIKLIITPIQKSLGYLFGNYFDELDRKYRYKEDWYIIPYFLKSVFCYIIDVRRHRFQNWYLFIKQVQQNGDHLAISYTRPMAEKGEFQLETFTYIETYNIVLRLSHILHFDYNVQAGDYVAIDCTNKPLFVFLWLSLWNIGAIPAFLNYNTKGTPLVHSLKISNITQVFIDPDASNPIRESEEEIKNALPDVKLNYLEEQDLMHELLNSQSPEFLQQDNVRTPLGLTDFKPSMLIYTSGTTGLPKSAIMSWRKSSVGCQVFGHVLHMTNESTVFTAMPLFHSTAALLGACAILSHGGCLALSHKFSASTFWKQVYLTGATHIQYVGEVCRYLLHTPISKYEKMHKVKVAYGNGLRPDIWQDFRKRFNIEVIGEFYAATEAPFATTTFQKGDFGIGACRNYGTIIQWFLSFQQTLVRMDPNDDSVIYRNSKGFCEVAPVGEPGEMLMRIFFPKKPETSFQGYLGNAKETKSKVVRDVFRRGDAWYRCGDLLKADEYGLWYFLDRMGDTFRWKSENVSTTEVEDQLTASNKEQYAQVLVVGIKVPKYEGRAGFAVIKLTDNSLDITAKTKLLNDSLSRLNLPSYAMPLFVKFVDEIKMTDNHKILKKVYREQKLPKGLDGNDTIFWLKNYKRYEVLTAADWEAIDAQTIKL.

At 1–5 (MSPIQ) the chain is on the cytoplasmic side. A helical transmembrane segment spans residues 6–26 (VVVFALSRIFLLLFRLIKLII). The Extracellular segment spans residues 27 to 148 (TPIQKSLGYL…YVAIDCTNKP (122 aa)). The chain crosses the membrane as a helical span at residues 149 to 169 (LFVFLWLSLWNIGAIPAFLNY). At 170 to 270 (NTKGTPLVHS…TGLPKSAIMS (101 aa)) the chain is on the cytoplasmic side. 256 to 267 (YTSGTTGLPKSA) contacts ATP. The stretch at 271–339 (WRKSSVGCQV…FWKQVYLTGA (69 aa)) is an intramembrane region. Residues 340–669 (THIQYVGEVC…EAIDAQTIKL (330 aa)) are Cytoplasmic-facing. The FACS signature appears at 501–551 (DAWYRCGDLLKADEYGLWYFLDRMGDTFRWKSENVSTTEVEDQLTASNKEQ). The C-terminal peroxisome targeting signal (PTS1) motif lies at 667 to 669 (IKL).

The protein belongs to the ATP-dependent AMP-binding enzyme family. Interacts with fatty acyl-CoA synthetases FAA1 and FAA4.

It localises to the lipid droplet. It is found in the cell membrane. The protein localises to the peroxisome membrane. The protein resides in the peroxisome. It catalyses the reaction a very long-chain fatty acid + ATP + CoA = a very long-chain fatty acyl-CoA + AMP + diphosphate. The catalysed reaction is tetracosanoate + ATP + CoA = tetracosanoyl-CoA + AMP + diphosphate. Its function is as follows. Acyl-CoA synthetase required for both the import of long chain fatty acids (LCFAs) (C14-C18) and the activation very long chain fatty acids (VLCFAs) (C20-C26) by esterification of the fatty acids into metabolically active CoA-thioesters for subsequent degradation or incorporation into phospholipids. The transport and fatty acyl-CoA synthetase activities are genetically separable and are thus independent activities. Esterifies VLCFAs in the peroxisome matrix. The VLCFAs are actively transported into peroxisomes by a PXA1-PXA2 heterodimeric transporter in the peroxisomal membrane. The sequence is that of Very long-chain fatty acid transport protein (FAT1) from Saccharomyces cerevisiae (strain ATCC 204508 / S288c) (Baker's yeast).